Here is a 220-residue protein sequence, read N- to C-terminus: Chloramphenicol acetyltransferase (220 aa).

The Proton acceptor role is filled by His-187.

This sequence belongs to the chloramphenicol acetyltransferase family. In terms of assembly, homotrimer.

It catalyses the reaction chloramphenicol + acetyl-CoA = chloramphenicol 3-acetate + CoA. Functionally, this enzyme is an effector of chloramphenicol resistance in bacteria. The chain is Chloramphenicol acetyltransferase (cat86) from Bacillus pumilus (Bacillus mesentericus).